We begin with the raw amino-acid sequence, 110 residues long: Putative membrane protein insertion efficiency factor (110 aa).

The protein belongs to the UPF0161 family.

The protein localises to the cell inner membrane. In terms of biological role, could be involved in insertion of integral membrane proteins into the membrane. This Aliarcobacter butzleri (strain RM4018) (Arcobacter butzleri) protein is Putative membrane protein insertion efficiency factor.